The chain runs to 500 residues: NAD(P)H-quinone oxidoreductase chain 4, chloroplastic (500 aa).

The next 15 membrane-spanning stretches (helical) occupy residues 4–24, 35–55, 87–107, 113–130, 134–154, 167–187, 211–231, 242–262, 272–292, 305–325, 330–350, 364–384, 386–406, 411–431, and 462–482; these read FPWL…MLFL, YTIC…CYNF, IGTI…AFPV, LFHF…GSFS, LLLF…LLAM, FILY…GISL, ILFY…IPLH, HYST…YGLV, AHSM…IYAA, IAYS…SITD, GAIL…FLAG, MGGM…LSMA, LALP…GIIT, FLIF…LTPI, and LFLS…PDFV.

The protein belongs to the complex I subunit 4 family.

The protein localises to the plastid. The protein resides in the chloroplast thylakoid membrane. It carries out the reaction a plastoquinone + NADH + (n+1) H(+)(in) = a plastoquinol + NAD(+) + n H(+)(out). It catalyses the reaction a plastoquinone + NADPH + (n+1) H(+)(in) = a plastoquinol + NADP(+) + n H(+)(out). This is NAD(P)H-quinone oxidoreductase chain 4, chloroplastic from Capsella bursa-pastoris (Shepherd's purse).